The following is a 372-amino-acid chain: MSRSAASSVGSITGESPQKKLLQSASSSSSLAILHDEIAVSCFARVPRCYYPAISLVCRNFRRLMASPEIYIERSVIRRTENILYVAIRSEATKTLSWYTLNLKPFGTTEISHRLVPVPSFPSIPGYGTTIISSGSETYVIGGCIDGELVSTVSVIDCRSHTCRFLPNMKEPRKCAAVGLIDGKLYVVGGCNAPSLSWVEVFNFKKRTWESVLSLDNVDMDEQMNFFVMNDKIYRIGQNTMFVYDPKKGRFEEDLALGRLWFNESCPIDNVLYGFYCMNQILAYDLVVGMGTVFWGLEGLPEGLQSCTGRMVNHGGRLAILFKKSPTEIWRTEIAIERAEEGGYISGKFLWSNHVLTLTDSFIIERALAVTV.

Positions L34–R74 constitute an F-box domain. 3 Kelch repeats span residues E137–G183, K184–M229, and K232–Q280.

This Arabidopsis thaliana (Mouse-ear cress) protein is F-box/kelch-repeat protein At4g14905.